Here is a 100-residue protein sequence, read N- to C-terminus: Urease subunit gamma (100 aa).

This sequence belongs to the urease gamma subunit family. Heterotrimer of UreA (gamma), UreB (beta) and UreC (alpha) subunits. Three heterotrimers associate to form the active enzyme.

It is found in the cytoplasm. The enzyme catalyses urea + 2 H2O + H(+) = hydrogencarbonate + 2 NH4(+). Its pathway is nitrogen metabolism; urea degradation; CO(2) and NH(3) from urea (urease route): step 1/1. The sequence is that of Urease subunit gamma from Pseudomonas fluorescens (strain ATCC BAA-477 / NRRL B-23932 / Pf-5).